Reading from the N-terminus, the 445-residue chain is ATPase PAAT (445 aa).

Phosphoserine is present on residues Ser-177, Ser-182, Ser-254, and Ser-302. The disordered stretch occupies residues 426–445 (PTGIPLRHYDSGERLSNGER). Positions 432–445 (RHYDSGERLSNGER) are enriched in basic and acidic residues.

As to quaternary structure, homodimer. Interacts with ABCB7, ABCB8/MITOSUR and ABCB10.

The protein localises to the cytoplasm. It localises to the mitochondrion. It carries out the reaction ATP + H2O = ADP + phosphate + H(+). ATPase that regulates mitochondrial ABC transporters ABCB7, ABCB8/MITOSUR and ABCB10. Regulates mitochondrial ferric concentration and heme biosynthesis and plays a role in the maintenance of mitochondrial homeostasis and cell survival. This is ATPase PAAT from Homo sapiens (Human).